The following is a 182-amino-acid chain: Dual-action ribosomal maturation protein DarP (182 aa).

A disordered region spans residues 1-25 (MEENLADNSEREARPSKTKRKKEMH).

The protein belongs to the DarP family.

It localises to the cytoplasm. In terms of biological role, member of a network of 50S ribosomal subunit biogenesis factors which assembles along the 30S-50S interface, preventing incorrect 23S rRNA structures from forming. Promotes peptidyl transferase center (PTC) maturation. In Nitrosospira multiformis (strain ATCC 25196 / NCIMB 11849 / C 71), this protein is Dual-action ribosomal maturation protein DarP.